The primary structure comprises 97 residues: Co-chaperonin GroES (97 aa).

The protein belongs to the GroES chaperonin family. In terms of assembly, heptamer of 7 subunits arranged in a ring. Interacts with the chaperonin GroEL.

Its subcellular location is the cytoplasm. In terms of biological role, together with the chaperonin GroEL, plays an essential role in assisting protein folding. The GroEL-GroES system forms a nano-cage that allows encapsulation of the non-native substrate proteins and provides a physical environment optimized to promote and accelerate protein folding. GroES binds to the apical surface of the GroEL ring, thereby capping the opening of the GroEL channel. This chain is Co-chaperonin GroES, found in Escherichia fergusonii (strain ATCC 35469 / DSM 13698 / CCUG 18766 / IAM 14443 / JCM 21226 / LMG 7866 / NBRC 102419 / NCTC 12128 / CDC 0568-73).